We begin with the raw amino-acid sequence, 2245 residues long: Myosin-J heavy chain (2245 aa).

Positions 25-77 (QEGAGVWIPDQELGWIGADVIEHSETSADQVLVRTEDDREVKIPLSKVFQKNP) constitute a Myosin N-terminal SH3-like domain. One can recognise a Myosin motor domain in the interval 81-821 (EGVDDLSFLS…QLASLEDMRL (741 aa)). 174–181 (GESGAGKT) serves as a coordination point for ATP. Residues 646 to 672 (FTQSPGGHPQGNGGPTSSNTKGTSGSS) are disordered. Positions 660-672 (PTSSNTKGTSGSS) are enriched in low complexity. Residues 669–749 (SGSSSMKFLS…GFPTRRLLSE (81 aa)) form an actin-binding region. IQ domains are found at residues 824–851 (LDRS…RDAS), 872–901 (RTHS…ASLQ), and 943–972 (KLRG…EARS). Positions 973 to 1812 (LRTVQEQKNK…NYHMLEDRME (840 aa)) form a coiled coil. The segment at 1504–1524 (KKQLTQLQQQHEQSSTQLLLA) is disordered. Positions 1506–1523 (QLTQLQQQHEQSSTQLLL) are enriched in low complexity. Residues 1969–2188 (IDFIDQLQQS…IASICPPNKS (220 aa)) enclose the Dilute domain.

It belongs to the TRAFAC class myosin-kinesin ATPase superfamily. Myosin family. In terms of assembly, homodimer that associates with six light chains.

The protein localises to the contractile vacuole. In terms of biological role, processive motor protein that can move over long distances along F-actin without disassociating; processiveness depends on high physiological Mg(2+) concentrations. Presents a high actin affinity in the presence of ADP, fast ATP hydrolysis, and a high steady-state ATPase activity in the presence of actin that is rate limited by ADP release. Physiological decrease of free Mg(2+) ions leads to an increased rate of ADP release and shortening of the fraction of time it spends in the strong acting binding states. In Dictyostelium discoideum (Social amoeba), this protein is Myosin-J heavy chain (myoJ).